The sequence spans 304 residues: N-acetylmuramic acid 6-phosphate etherase (304 aa).

One can recognise an SIS domain in the interval 57 to 220; it reads AVKGLSAGGR…STATMVGLGK (164 aa). Catalysis depends on Glu-85, which acts as the Proton donor. Glu-116 is an active-site residue.

Belongs to the GCKR-like family. MurNAc-6-P etherase subfamily. As to quaternary structure, homodimer.

It catalyses the reaction N-acetyl-D-muramate 6-phosphate + H2O = N-acetyl-D-glucosamine 6-phosphate + (R)-lactate. The protein operates within amino-sugar metabolism; N-acetylmuramate degradation. In terms of biological role, specifically catalyzes the cleavage of the D-lactyl ether substituent of MurNAc 6-phosphate, producing GlcNAc 6-phosphate and D-lactate. This chain is N-acetylmuramic acid 6-phosphate etherase, found in Cutibacterium acnes (strain DSM 16379 / KPA171202) (Propionibacterium acnes).